The primary structure comprises 1228 residues: MHTRMQIRNRVNFGKITDLNLLPNLIYVQKKSFDWFLQSEVKDPTKRLNQGLEAVFRESFPIESPNNDMVMEYGHYVLGEPKRDPQECKDTDSSFAVPLKAVIRLIIKDTGEIREQVVYMGDLPVMTDHGTFIINGAERVVVSQLHRSPGIFFSYDQVRDTFSARVIPYRGSWLEFEMDNKGILVAKIDRKKKFPATLLVKAMGMGTNEEVLRLFYGSSKMKIAGANPKDLKRLIGRRTIADIINMETGEVMLDAGSKINEDNISILREMKVKEVDVIEFPKGKDNPVLINCLEKDGVNDYEDAVKKFHTIMRPGEPSTIENAEAELKRLFFSPKTFDLGIVGRYKINSKFEFNNPKEFSKADDRVLRKQDIIETVRYLVMLMSEAENYYPDDIDHLGNRRIRSVGELIANQLKLGFSRVERVIKERMTVQEPEQQTPQLLISIKPITAVINEFFGSSQLSQFMDQTNPLAELTHKRRLNALGPGGLSRDRAGFEVRDVHYSHYGRMCPIETPEGPNIGLILSMSSFARVNDYGFIETPYRLVKNGKVQKQVEYLTADKEEYHYMAQSNSTVDEKGEFTSKLISTRHRGDFPFRSPAEIQYMDLAPLQVVSVSTALIPFLEHDDANRALMGSNMQRQAVPLLTEEAPFVGTGMEARAAYDAGVCIVAKKDGVVSKVDATGVWIKEDQSKEIVHYPLIKFKKTNQGTCFNQKPNVSMLHTTTGGKVSKVSKERVEVTTPNGEKETHELLLSDEVQFHAVVKEGQEVGIGAPVAGQIIKGEKYGDFGQILQKGTVLANGPSTDAGYLALGRNVLVAFMPWEGYNFEDAILISERIIKDDVFSSIHIEEFEIQARETKLGQEQITRDIPNLSDKAFRDLDESGVIRVGAEVKPGDILVGMVTPKGETDLTPEYKLLHSIFGEKAKEVRDSSLRMPNGFEGTVIDIKRYSRETGDELAAGVEEMVKVYVARKRKLLVGDKMAGRHGNKGVVARVMAQEDMPYMEDGSPVDIVLNPLGVPSRMNLGQIFETQLGFAAKKLGINFETPVFDGASEGDVNDFCKKAGLPENSKFQLYDGRTGEKFINQVFCGYIYMLKLAHLVDDKIHARSTGPYSLVTQQPLGGKAQFGGQRLGEMEVWALEAYGASHTLQELLTIKSDDMLGRARIYEAIVKGIHSIKPGIPESFNVLVQELRGLALDIIIKDSEGLEVDISDYEDEFSKNKKKIKFETIENV.

Belongs to the RNA polymerase beta chain family. As to quaternary structure, the RNAP catalytic core consists of 2 alpha, 1 beta, 1 beta' and 1 omega subunit. When a sigma factor is associated with the core the holoenzyme is formed, which can initiate transcription.

The catalysed reaction is RNA(n) + a ribonucleoside 5'-triphosphate = RNA(n+1) + diphosphate. Functionally, DNA-dependent RNA polymerase catalyzes the transcription of DNA into RNA using the four ribonucleoside triphosphates as substrates. This chain is DNA-directed RNA polymerase subunit beta, found in Leptospira biflexa.